Reading from the N-terminus, the 342-residue chain is Isopentenyl-diphosphate delta-isomerase (342 aa).

11–12 is a binding site for substrate; that stretch reads RK. Residues Ser-68, 69-71, Ser-99, and Asn-127 each bind FMN; that span reads SMT. Substrate is bound at residue 99–101; that stretch reads SMR. Glu-163 contributes to the Mg(2+) binding site. Residues Lys-194, Thr-224, and 295–296 each bind FMN; that span reads AG.

This sequence belongs to the IPP isomerase type 2 family. In terms of assembly, homooctamer. Dimer of tetramers. It depends on FMN as a cofactor. The cofactor is NADPH. Requires Mg(2+) as cofactor.

It localises to the cytoplasm. The enzyme catalyses isopentenyl diphosphate = dimethylallyl diphosphate. Functionally, involved in the biosynthesis of isoprenoids. Catalyzes the 1,3-allylic rearrangement of the homoallylic substrate isopentenyl (IPP) to its allylic isomer, dimethylallyl diphosphate (DMAPP). This chain is Isopentenyl-diphosphate delta-isomerase, found in Rickettsia typhi (strain ATCC VR-144 / Wilmington).